The following is a 165-amino-acid chain: Transcriptional regulator MraZ (165 aa).

SpoVT-AbrB domains follow at residues 5–51 and 80–123; these read TYEG…GEEL and SAEL…NPER.

It belongs to the MraZ family. As to quaternary structure, forms oligomers.

Its subcellular location is the cytoplasm. It localises to the nucleoid. The protein is Transcriptional regulator MraZ of Hyphomonas neptunium (strain ATCC 15444).